We begin with the raw amino-acid sequence, 521 residues long: 56 kDa type-specific antigen (521 aa).

Positions 1 to 22 are cleaved as a signal peptide; that stretch reads MRKIMLIASAMSALSLPFSANA. Residues 64 to 86 traverse the membrane as a helical segment; that stretch reads LPLIKGMPFGVTLAAGMTITPGV. The interval 386–415 is disordered; it reads LGVDQGQEGGCSKDKKQSDTTAEESKKEGK. Residues 396–415 show a composition bias toward basic and acidic residues; it reads CSKDKKQSDTTAEESKKEGK. The chain crosses the membrane as a helical span at residues 469 to 484; it reads TGMVGSLALGVAANVA.

The protein resides in the cell membrane. Its function is as follows. May be an adherent factor for rickettsial adsorption to the host-cell surface and a determinant of virulence of individual rickettsial strain. It is the major outer membrane protein. This chain is 56 kDa type-specific antigen, found in Orientia tsutsugamushi (Rickettsia tsutsugamushi).